Consider the following 93-residue polypeptide: Putative regulatory protein Clos_1422 (93 aa).

This sequence belongs to the RemA family.

The sequence is that of Putative regulatory protein Clos_1422 from Alkaliphilus oremlandii (strain OhILAs) (Clostridium oremlandii (strain OhILAs)).